Reading from the N-terminus, the 200-residue chain is 3-isopropylmalate dehydratase small subunit (200 aa).

Belongs to the LeuD family. LeuD type 1 subfamily. Heterodimer of LeuC and LeuD.

The enzyme catalyses (2R,3S)-3-isopropylmalate = (2S)-2-isopropylmalate. It participates in amino-acid biosynthesis; L-leucine biosynthesis; L-leucine from 3-methyl-2-oxobutanoate: step 2/4. In terms of biological role, catalyzes the isomerization between 2-isopropylmalate and 3-isopropylmalate, via the formation of 2-isopropylmaleate. This chain is 3-isopropylmalate dehydratase small subunit, found in Pseudarthrobacter chlorophenolicus (strain ATCC 700700 / DSM 12829 / CIP 107037 / JCM 12360 / KCTC 9906 / NCIMB 13794 / A6) (Arthrobacter chlorophenolicus).